A 33-amino-acid chain; its full sequence is Maurocalcin (33 aa).

Disulfide bonds link Cys3–Cys17, Cys10–Cys21, and Cys16–Cys32. Residues 22–24 form an essential for stimulation of [3H]ryanodine binding to RYR region; the sequence is KRR.

This sequence belongs to the scorpion calcin family. In terms of processing, the non-natural D-maurocalcin (a chiral analog of maurocalcin composed of D-amino acids) completely loses the ability to stimulate [3H]ryanodine binding and calcium release. Its protease resistance, combined with its efficient cell penetration at concentrations devoid of cell toxicity, suggests that it should be an excellent vector for in vivo applications. Expressed by the venom gland.

It is found in the secreted. Functionally, this toxin stabilizes ryanodine receptor 1 (RyR1) opening in a long-lasting subconductance state (48%-60% of the full conductance state). Furthermore, it triggers calcium release from sarcoplasmic vesicles (6.6 nM are enough to induce a sharp release, and 60% of the total calcium is released after toxin (100 nM) addition) probably by acting as a cell-penetrating peptide (CPP). In addition, it has been shown to dose-dependently stimulate ryanodine binding to RyR1 (EC(50)=12.5-26.4 nM). It also augments the bell-shaped calcium-[3H]ryanodine binding curve that is maximal at about 10 uM calcium concentration. It binds a different site as ryanodine. It acts synergistically with caffeine. In vivo, intracerebroventricular injection into mice causes death. This is Maurocalcin from Scorpio palmatus (Israeli golden scorpion).